The sequence spans 391 residues: Aminoacetone oxidase (391 aa).

Alanine 14, glutamate 33, isoleucine 134, glutamate 362, asparagine 374, and isoleucine 375 together coordinate FAD.

Belongs to the BaiN/RdsA family. As to quaternary structure, monomer. Requires FAD as cofactor.

Its function is as follows. Flavoprotein that probably catalyzes the condensation of two molecules of aminoacetone to yield 3,6-dimethyl-2,5-dihydropyrazine, which is subsequently oxidized to 2,5-dimethylpyrazine. It could be involved in a microbial defense mechanism related to aminoacetone catabolism through a pathway yielding dimethylpyrazine derivatives instead of methylglyoxal. It has also low aminoacetone oxidase activity, and can produce hydrogen peroxide from aminoacetone. In addition, it shows very low L-amino acid oxidase activity, and can produce hydrogen peroxide from peptone and from seven amino acids, L-aspartate, L-tryptophan, L-lysine, L-isoleucine, L-arginine, L-asparagine and L-glutamine. It cannot use L-malate, oxaloacetate or alpha-aminobutyrate. Plays a role in antioxidant defense. The protein is Aminoacetone oxidase of Streptococcus cristatus.